A 288-amino-acid chain; its full sequence is Energy-coupling factor transporter ATP-binding protein EcfA2 (288 aa).

Positions 3–246 (IKLEQLGYCY…PDELVDLGLS (244 aa)) constitute an ABC transporter domain. Residue 40 to 47 (GHTGSGKS) coordinates ATP.

Belongs to the ABC transporter superfamily. Energy-coupling factor EcfA family. Forms a stable energy-coupling factor (ECF) transporter complex composed of 2 membrane-embedded substrate-binding proteins (S component), 2 ATP-binding proteins (A component) and 2 transmembrane proteins (T component).

Its subcellular location is the cell membrane. ATP-binding (A) component of a common energy-coupling factor (ECF) ABC-transporter complex. Unlike classic ABC transporters this ECF transporter provides the energy necessary to transport a number of different substrates. This is Energy-coupling factor transporter ATP-binding protein EcfA2 from Listeria monocytogenes serovar 1/2a (strain ATCC BAA-679 / EGD-e).